The following is a 971-amino-acid chain: MELNDGNLQTLTEYLQKTLSADPAVRRPAEKFLESVEGNQNYPILLLAVLEKSQNEVIRVCSAVTFKNYIKRNWRIVEDEPNKISDPDRTAIKANIVNLMLTSPEQIQKQLSDAISIIGREDFPLKWPDLLTEMVNRFQSGDFHIINGVLRTAHSLFKRYRHEFKSNELWSEIKLVLDTFAQPLTELFKATIELCQTHATDINALKVLFSSLTLISKLFYSLNFQDLPEFFEDNMETWMTNFHNLLTLDNKLLQTDDEEEAGLLELLKSQICDNAALYAQKYDEEFQPYLPRFVTAIWNLLVTTGQEVKYDLLVSNAIQFLASVCERPHYKHLFEDQNVLTSICEKVIVPNMEFRSADEEAFEDNSEEYIIRDLEGSDIDTRRRAACDLVRGLCKFFEGPVTGIFSGYVNSMLAEYAKNPGVNWKHKDAAIYLVTSLASKAQTQKHGITQANELVNLSEFFLNHILIDLKSPNVNEFPVLKSDAIKYVMTFRSQLPKEQLLQAVPLLVSHLQAESIVQHTYAAHALERLFTMRGGNNTTLITPTEMAPFTEQLLNHLFKALAIPGSSENEYIMKAIMRSFSLLQEAIVPYIPTLIGQLTHKLLLVSKNPSKPHFNHYLFESLCLSIRITCKANPDTVSSFEEALFPVFTEILQNDVQEFVPYVFQVMSLLLEIHSNSIPSSYMALFPHLLQPVLWERTGNIPPLVRLLQAYLEKGAAAIANTASDKIPGLLGVFQKLIASKANDHQGFYLLNSIVEHMPAEAITQYRKQIFILLFQRLQSSKTTKFVKSFLVFINLYSVKYGAIALQEIFDDIQPKMFGMVVEKIVIPEVQKVSGQVEKKICAVGIIKILTECPAMMDTEYTKLWAPLLQALIGLFELPEDDSIPDDEHFIDIEDTPGYQTAFSQLAFAGKKEHDPIGDAVSNPKILLAQSLHKLSTACPGRVPSMLSTSLPTEALQFLQGYLQAATVQLV.

Positions 29–102 constitute an Importin N-terminal domain; that stretch reads AEKFLESVEG…KANIVNLMLT (74 aa).

This sequence belongs to the XPO2/CSE1 family. Interacts with cftr. As to expression, detected in larval gut, liver, exocrine pancreas and part of the brain and retina at 96 hpf.

The protein resides in the cytoplasm. The protein localises to the nucleus. It is found in the apical cell membrane. Its subcellular location is the basal cell membrane. It localises to the lateral cell membrane. Export receptor for importin alpha. Mediates importin-alpha re-export from the nucleus to the cytoplasm after import substrates have been released into the nucleoplasm. Negatively regulates fluid secretion and plays a role in fluid homeostasis by down-regulating cftr activity. The polypeptide is Exportin-2 (cse1l) (Danio rerio (Zebrafish)).